Consider the following 113-residue polypeptide: Phosphoribosyl-ATP pyrophosphatase (113 aa).

The protein belongs to the PRA-PH family.

The protein localises to the cytoplasm. It carries out the reaction 1-(5-phospho-beta-D-ribosyl)-ATP + H2O = 1-(5-phospho-beta-D-ribosyl)-5'-AMP + diphosphate + H(+). The protein operates within amino-acid biosynthesis; L-histidine biosynthesis; L-histidine from 5-phospho-alpha-D-ribose 1-diphosphate: step 2/9. The sequence is that of Phosphoribosyl-ATP pyrophosphatase from Hydrogenovibrio crunogenus (strain DSM 25203 / XCL-2) (Thiomicrospira crunogena).